Consider the following 742-residue polypeptide: Enhancer of polycomb-like protein 1 (742 aa).

The span at 1–27 (MPTPSAQLDQGIISSNGGTSGVSASST) shows a compositional bias: polar residues. Disordered regions lie at residues 1-28 (MPTP…SSTR), 416-446 (RQQS…QCQQ), and 718-742 (KKLV…HQQA). The span at 724–734 (QRQQQQQQQEQ) shows a compositional bias: low complexity.

It belongs to the enhancer of polycomb family. As to quaternary structure, component of the NuA4 histone acetyltransferase complex.

It is found in the nucleus. Component of the NuA4 histone acetyltransferase complex which is involved in transcriptional activation of selected genes principally by acetylation of nucleosomal histone H4 and H2A. The NuA4 complex is also involved in DNA repair. Involved in gene silencing by neighboring heterochromatin, blockage of the silencing spreading along the chromosome, and required for cell cycle progression through G2/M. This chain is Enhancer of polycomb-like protein 1 (EPL1), found in Eremothecium gossypii (strain ATCC 10895 / CBS 109.51 / FGSC 9923 / NRRL Y-1056) (Yeast).